Consider the following 244-residue polypeptide: Nonsense-mediated decay protein 4 (244 aa).

It is found in the cytoplasm. Its function is as follows. Involved in nonsense-mediated decay of mRNAs containing premature stop codons. In Kluyveromyces lactis (strain ATCC 8585 / CBS 2359 / DSM 70799 / NBRC 1267 / NRRL Y-1140 / WM37) (Yeast), this protein is Nonsense-mediated decay protein 4 (NMD4).